Here is a 67-residue protein sequence, read N- to C-terminus: Alpha-conotoxin-like Pu1.1 (67 aa).

The N-terminal stretch at 1 to 21 is a signal peptide; the sequence is MGMRMMFTVFLLVVLATTVVS. A propeptide spanning residues 22–46 is cleaved from the precursor; it reads FTSDRTSDGRNAAFNAFDLIALTAR. Gln-47 bears the Pyrrolidone carboxylic acid mark. 2 disulfides stabilise this stretch: Cys-49–Cys-55 and Cys-50–Cys-63. Residues 51-53 are lacks the Ser-Xaa-Pro motif that is crucial for potent interaction with nAChR; that stretch reads NVP. Cys-63 carries the post-translational modification Cysteine amide.

This sequence belongs to the conotoxin A superfamily. In terms of tissue distribution, expressed by the venom duct.

Its subcellular location is the secreted. In terms of biological role, alpha-conotoxins act on postsynaptic membranes, they bind to the nicotinic acetylcholine receptors (nAChR) and thus inhibit them. Has possibly a distinct nAChR binding mode from other alpha-conotoxins, due to a different three residue motif (lacks the Ser-Xaa-Pro motif). This Conus pulicarius (Flea-bitten cone) protein is Alpha-conotoxin-like Pu1.1.